A 334-amino-acid polypeptide reads, in one-letter code: Glycerol-3-phosphate dehydrogenase [NAD(P)+] (334 aa).

3 residues coordinate NADPH: Trp13, Arg33, and Lys106. Sn-glycerol 3-phosphate is bound by residues Lys106, Gly137, and Ser139. Ala141 provides a ligand contact to NADPH. Lys192, Asp245, Ser255, Arg256, and Asn257 together coordinate sn-glycerol 3-phosphate. The active-site Proton acceptor is Lys192. Arg256 contributes to the NADPH binding site. NADPH contacts are provided by Val280 and Glu282.

This sequence belongs to the NAD-dependent glycerol-3-phosphate dehydrogenase family.

The protein resides in the cytoplasm. The enzyme catalyses sn-glycerol 3-phosphate + NAD(+) = dihydroxyacetone phosphate + NADH + H(+). It catalyses the reaction sn-glycerol 3-phosphate + NADP(+) = dihydroxyacetone phosphate + NADPH + H(+). Its pathway is membrane lipid metabolism; glycerophospholipid metabolism. In terms of biological role, catalyzes the reduction of the glycolytic intermediate dihydroxyacetone phosphate (DHAP) to sn-glycerol 3-phosphate (G3P), the key precursor for phospholipid synthesis. The protein is Glycerol-3-phosphate dehydrogenase [NAD(P)+] of Chlamydia muridarum (strain MoPn / Nigg).